The sequence spans 281 residues: NAD kinase (281 aa).

Catalysis depends on Asp-61, which acts as the Proton acceptor. NAD(+) is bound by residues 61-62 (DG), 134-135 (ND), Arg-145, Asp-164, 175-180 (TAYSLS), and Gln-234.

It belongs to the NAD kinase family. The cofactor is a divalent metal cation.

Its subcellular location is the cytoplasm. It catalyses the reaction NAD(+) + ATP = ADP + NADP(+) + H(+). Functionally, involved in the regulation of the intracellular balance of NAD and NADP, and is a key enzyme in the biosynthesis of NADP. Catalyzes specifically the phosphorylation on 2'-hydroxyl of the adenosine moiety of NAD to yield NADP. This Clostridium botulinum (strain Loch Maree / Type A3) protein is NAD kinase.